A 307-amino-acid polypeptide reads, in one-letter code: 4-hydroxythreonine-4-phosphate dehydrogenase (307 aa).

Substrate is bound by residues His-126 and Thr-127. The a divalent metal cation site is built by His-156, His-195, and His-251. Substrate is bound by residues Lys-259, Asn-268, and Arg-277.

This sequence belongs to the PdxA family. Homodimer. Zn(2+) is required as a cofactor. Mg(2+) serves as cofactor. It depends on Co(2+) as a cofactor.

The protein resides in the cytoplasm. It catalyses the reaction 4-(phosphooxy)-L-threonine + NAD(+) = 3-amino-2-oxopropyl phosphate + CO2 + NADH. Its pathway is cofactor biosynthesis; pyridoxine 5'-phosphate biosynthesis; pyridoxine 5'-phosphate from D-erythrose 4-phosphate: step 4/5. Functionally, catalyzes the NAD(P)-dependent oxidation of 4-(phosphooxy)-L-threonine (HTP) into 2-amino-3-oxo-4-(phosphooxy)butyric acid which spontaneously decarboxylates to form 3-amino-2-oxopropyl phosphate (AHAP). The sequence is that of 4-hydroxythreonine-4-phosphate dehydrogenase from Helicobacter pylori (strain J99 / ATCC 700824) (Campylobacter pylori J99).